The chain runs to 241 residues: Carboxy-S-adenosyl-L-methionine synthase (241 aa).

S-adenosyl-L-methionine is bound by residues Tyr38, Gly63–Ser65, Asp88–Asn89, Asp116–Ile117, Asn131, and Arg198.

This sequence belongs to the class I-like SAM-binding methyltransferase superfamily. Cx-SAM synthase family. As to quaternary structure, homodimer.

The enzyme catalyses prephenate + S-adenosyl-L-methionine = carboxy-S-adenosyl-L-methionine + 3-phenylpyruvate + H2O. Catalyzes the conversion of S-adenosyl-L-methionine (SAM) to carboxy-S-adenosyl-L-methionine (Cx-SAM). This chain is Carboxy-S-adenosyl-L-methionine synthase, found in Glaesserella parasuis serovar 5 (strain SH0165) (Haemophilus parasuis).